Consider the following 348-residue polypeptide: Ricin B-like lectin R40C1 (348 aa).

The interval 1 to 26 is disordered; that stretch reads MFGFGHHGHHGQDQPPQHHGGGGGGA. The Ricin B-type lectin domain maps to 199 to 345; sequence TVRIFCKADE…CEGDNQRWKI (147 aa).

In terms of tissue distribution, expressed in roots and shoots.

Lectin which binds carbohydrates in vitro. Interacts through its lectin domain with glycan structures containing specific motifs. In Oryza sativa subsp. japonica (Rice), this protein is Ricin B-like lectin R40C1.